Reading from the N-terminus, the 34-residue chain is Mytilin-A (34 aa).

4 disulfide bridges follow: cysteine 2-cysteine 27, cysteine 6-cysteine 29, cysteine 10-cysteine 31, and cysteine 15-cysteine 34.

It is found in the secreted. Has antibacterial activity against A.viridans, B.megaterium, M.luteus, E.faecalis, S.aureus and E.coli. It is active against the marine species A.carrageenovora, P.alginovora and C.drobachiensis. The protein is Mytilin-A of Mytilus edulis (Blue mussel).